Consider the following 236-residue polypeptide: 2-C-methyl-D-erythritol 4-phosphate cytidylyltransferase (236 aa).

Belongs to the IspD/TarI cytidylyltransferase family. IspD subfamily. In terms of assembly, homodimer.

It catalyses the reaction 2-C-methyl-D-erythritol 4-phosphate + CTP + H(+) = 4-CDP-2-C-methyl-D-erythritol + diphosphate. The protein operates within isoprenoid biosynthesis; isopentenyl diphosphate biosynthesis via DXP pathway; isopentenyl diphosphate from 1-deoxy-D-xylulose 5-phosphate: step 2/6. Catalyzes the formation of 4-diphosphocytidyl-2-C-methyl-D-erythritol from CTP and 2-C-methyl-D-erythritol 4-phosphate (MEP). This is 2-C-methyl-D-erythritol 4-phosphate cytidylyltransferase from Salmonella paratyphi C (strain RKS4594).